We begin with the raw amino-acid sequence, 413 residues long: MLKKFIEDIEHHFEPGGKHEKWFALYEAAATLFYTPGLVTKRSSHVRDSVDLKRIMIMVWFAVFPAMFWGMYNAGGQAIAALNHMYAGDQLATVIAGNWHYWLTEMLGGTIGAEAGVGSMMLLGATYFLPIYATVFIVGGFWEVLFCMVRKHEVNEGFFVTSILFALIVPPTLPLWQAALGITFGVVVAKEIFGGTGRNFLNPALAGRAFLFFAYPAQISGDVVWTAADGFSGATALSQWAHGGSGALINNITGAPITWMDAFIGNIPGSIGEVSTLALMIGAAMIVYMRIASWRIIAGVMIGMIAVSTLFNVIGSDTNPMFNMPWHWHLVLGGFAFGMFFMATDPVSASFTNSGKWWYGILIGAMCVMIRVVNPAYPEGMMLAILFANLFAPLFDHVVIEKNIKRRLARYGK.

3 consecutive transmembrane segments (helical) span residues 55–75 (IMIM…YNAG), 128–148 (FLPI…LFCM), and 163–183 (ILFA…LGIT). FMN phosphoryl threonine is present on Thr-235. A run of 5 helical transmembrane segments spans residues 267 to 287 (IPGS…AMIV), 296 to 316 (IIAG…VIGS), 324 to 344 (MPWH…FMAT), 357 to 377 (WWYG…NPAY), and 380 to 400 (GMML…HVVI).

The protein belongs to the NqrB/RnfD family. In terms of assembly, composed of six subunits; NqrA, NqrB, NqrC, NqrD, NqrE and NqrF. It depends on FMN as a cofactor.

Its subcellular location is the cell inner membrane. It catalyses the reaction a ubiquinone + n Na(+)(in) + NADH + H(+) = a ubiquinol + n Na(+)(out) + NAD(+). NQR complex catalyzes the reduction of ubiquinone-1 to ubiquinol by two successive reactions, coupled with the transport of Na(+) ions from the cytoplasm to the periplasm. NqrA to NqrE are probably involved in the second step, the conversion of ubisemiquinone to ubiquinol. The chain is Na(+)-translocating NADH-quinone reductase subunit B from Vibrio campbellii (strain ATCC BAA-1116).